We begin with the raw amino-acid sequence, 180 residues long: Translation initiation factor IF-3 (180 aa).

Belongs to the IF-3 family. Monomer.

It localises to the cytoplasm. In terms of biological role, IF-3 binds to the 30S ribosomal subunit and shifts the equilibrium between 70S ribosomes and their 50S and 30S subunits in favor of the free subunits, thus enhancing the availability of 30S subunits on which protein synthesis initiation begins. This Shewanella oneidensis (strain ATCC 700550 / JCM 31522 / CIP 106686 / LMG 19005 / NCIMB 14063 / MR-1) protein is Translation initiation factor IF-3.